A 371-amino-acid polypeptide reads, in one-letter code: Cytochrome b (371 aa).

Transmembrane regions (helical) follow at residues 25–45, 69–90, 105–125, and 170–190; these read FGSM…FLAV, WIMQ…YIHI, WLSG…GYVL, and FFAL…IHII. Histidine 75 and histidine 89 together coordinate heme b. The heme b site is built by histidine 174 and histidine 188. Residue histidine 193 participates in a ubiquinone binding. The next 4 helical transmembrane spans lie at 218-238, 280-300, 312-332, and 339-358; these read YKDM…LSFM, LGGT…PFTH, LTQA…WTAT, and FTLI…IINP.

Belongs to the cytochrome b family. As to quaternary structure, the cytochrome bc1 complex contains 3 respiratory subunits (MT-CYB, CYC1 and UQCRFS1), 2 core proteins (UQCRC1 and UQCRC2) and probably 6 low-molecular weight proteins. It depends on heme b as a cofactor.

It is found in the mitochondrion inner membrane. In terms of biological role, component of the ubiquinol-cytochrome c reductase complex (complex III or cytochrome b-c1 complex) that is part of the mitochondrial respiratory chain. The b-c1 complex mediates electron transfer from ubiquinol to cytochrome c. Contributes to the generation of a proton gradient across the mitochondrial membrane that is then used for ATP synthesis. The protein is Cytochrome b (MT-CYB) of Toxicocalamus preussi (Preuss's forest snake).